Reading from the N-terminus, the 313-residue chain is Methionyl-tRNA formyltransferase (313 aa).

109–112 contributes to the (6S)-5,6,7,8-tetrahydrofolate binding site; that stretch reads SLLP.

It belongs to the Fmt family.

The enzyme catalyses L-methionyl-tRNA(fMet) + (6R)-10-formyltetrahydrofolate = N-formyl-L-methionyl-tRNA(fMet) + (6S)-5,6,7,8-tetrahydrofolate + H(+). Attaches a formyl group to the free amino group of methionyl-tRNA(fMet). The formyl group appears to play a dual role in the initiator identity of N-formylmethionyl-tRNA by promoting its recognition by IF2 and preventing the misappropriation of this tRNA by the elongation apparatus. This Thermotoga maritima (strain ATCC 43589 / DSM 3109 / JCM 10099 / NBRC 100826 / MSB8) protein is Methionyl-tRNA formyltransferase.